A 592-amino-acid chain; its full sequence is Polyadenylate-binding protein, cytoplasmic and nuclear (592 aa).

Basic and acidic residues predominate over residues Met1 to Glu10. The segment at Met1 to Ser43 is disordered. The span at Gln11–Asp20 shows a compositional bias: polar residues. Residues Gln21–Ser43 are compositionally biased toward low complexity. RRM domains lie at Ala50 to Arg128, Gly138 to Pro215, Thr231 to Lys308, and Val334 to Arg411. In terms of domain architecture, PABC spans Asn507–Lys586.

The protein belongs to the polyadenylate-binding protein type-1 family.

It localises to the cytoplasm. It is found in the nucleus. Functionally, binds the poly(A) tail of mRNA. Appears to be an important mediator of the multiple roles of the poly(A) tail in mRNA biogenesis, stability and translation. In the nucleus, involved in both mRNA cleavage and polyadenylation. Is also required for efficient mRNA export to the cytoplasm. Acts in concert with a poly(A)-specific nuclease (PAN) to affect poly(A) tail shortening, which may occur concomitantly with either nucleocytoplasmic mRNA transport or translational initiation. In the cytoplasm, stimulates translation initiation and regulates mRNA decay through translation termination-coupled poly(A) shortening, probably mediated by PAN. The protein is Polyadenylate-binding protein, cytoplasmic and nuclear (PAB1) of Kluyveromyces lactis (strain ATCC 8585 / CBS 2359 / DSM 70799 / NBRC 1267 / NRRL Y-1140 / WM37) (Yeast).